We begin with the raw amino-acid sequence, 570 residues long: Coiled-coil domain-containing protein 22 homolog (570 aa).

2 disordered regions span residues 110–129 (RQSE…REQL) and 234–280 (LTST…PLEL). Positions 248–257 (TSPTQTSTTA) are enriched in polar residues. Low complexity predominate over residues 265–276 (SSEATATSTTTT). Coiled-coil stretches lie at residues 308–471 (ELKI…LQRQ) and 529–570 (GEKL…ITVG).

The protein belongs to the CCDC22 family.

The polypeptide is Coiled-coil domain-containing protein 22 homolog (Drosophila willistoni (Fruit fly)).